The chain runs to 309 residues: Porphobilinogen deaminase (309 aa).

The residue at position 241 (Cys-241) is an S-(dipyrrolylmethanemethyl)cysteine.

It belongs to the HMBS family. In terms of assembly, monomer. Dipyrromethane serves as cofactor.

It carries out the reaction 4 porphobilinogen + H2O = hydroxymethylbilane + 4 NH4(+). Its pathway is porphyrin-containing compound metabolism; protoporphyrin-IX biosynthesis; coproporphyrinogen-III from 5-aminolevulinate: step 2/4. Its function is as follows. Tetrapolymerization of the monopyrrole PBG into the hydroxymethylbilane pre-uroporphyrinogen in several discrete steps. The sequence is that of Porphobilinogen deaminase from Bacillus cereus (strain B4264).